The chain runs to 499 residues: Glutamate--tRNA ligase (499 aa).

The short motif at 12–22 (PSPTGHLHIGN) is the 'HIGH' region element. The 'KMSKS' region signature appears at 259–263 (KLSKR). Lys262 contributes to the ATP binding site.

This sequence belongs to the class-I aminoacyl-tRNA synthetase family. Glutamate--tRNA ligase type 1 subfamily. In terms of assembly, monomer.

It localises to the cytoplasm. It carries out the reaction tRNA(Glu) + L-glutamate + ATP = L-glutamyl-tRNA(Glu) + AMP + diphosphate. In terms of biological role, catalyzes the attachment of glutamate to tRNA(Glu) in a two-step reaction: glutamate is first activated by ATP to form Glu-AMP and then transferred to the acceptor end of tRNA(Glu). The sequence is that of Glutamate--tRNA ligase from Lactobacillus acidophilus (strain ATCC 700396 / NCK56 / N2 / NCFM).